The following is a 421-amino-acid chain: Diaminobutyrate--2-oxoglutarate transaminase (421 aa).

Lysine 262 is modified (N6-(pyridoxal phosphate)lysine).

Belongs to the class-III pyridoxal-phosphate-dependent aminotransferase family. Pyridoxal 5'-phosphate serves as cofactor.

The catalysed reaction is L-2,4-diaminobutanoate + 2-oxoglutarate = L-aspartate 4-semialdehyde + L-glutamate. Its pathway is amine and polyamine biosynthesis; ectoine biosynthesis; L-ectoine from L-aspartate 4-semialdehyde: step 1/3. In terms of biological role, catalyzes reversively the conversion of L-aspartate beta-semialdehyde (ASA) to L-2,4-diaminobutyrate (DABA) by transamination with L-glutamate. The polypeptide is Diaminobutyrate--2-oxoglutarate transaminase (ectB) (Vibrio parahaemolyticus serotype O3:K6 (strain RIMD 2210633)).